Consider the following 387-residue polypeptide: Formate-dependent phosphoribosylglycinamide formyltransferase (387 aa).

Residues 21–22 and glutamate 81 contribute to the N(1)-(5-phospho-beta-D-ribosyl)glycinamide site; that span reads EL. ATP is bound by residues arginine 113, lysine 154, 159–164, 193–196, and glutamate 201; these read SSGHGQ and EEFV. In terms of domain architecture, ATP-grasp spans 118-306; it reads VFAAETLDLK…EFALHVRAVL (189 aa). Residues glutamate 265 and glutamate 277 each contribute to the Mg(2+) site. Residues aspartate 284, lysine 352, and 359 to 360 each bind N(1)-(5-phospho-beta-D-ribosyl)glycinamide; that span reads RR.

This sequence belongs to the PurK/PurT family. In terms of assembly, homodimer.

The catalysed reaction is N(1)-(5-phospho-beta-D-ribosyl)glycinamide + formate + ATP = N(2)-formyl-N(1)-(5-phospho-beta-D-ribosyl)glycinamide + ADP + phosphate + H(+). Its pathway is purine metabolism; IMP biosynthesis via de novo pathway; N(2)-formyl-N(1)-(5-phospho-D-ribosyl)glycinamide from N(1)-(5-phospho-D-ribosyl)glycinamide (formate route): step 1/1. Involved in the de novo purine biosynthesis. Catalyzes the transfer of formate to 5-phospho-ribosyl-glycinamide (GAR), producing 5-phospho-ribosyl-N-formylglycinamide (FGAR). Formate is provided by PurU via hydrolysis of 10-formyl-tetrahydrofolate. This chain is Formate-dependent phosphoribosylglycinamide formyltransferase, found in Sulfurovum sp. (strain NBC37-1).